The sequence spans 546 residues: CTP synthase (546 aa).

Residues 1 to 269 (MNSNTKIIFV…DAKLVELLNL (269 aa)) are amidoligase domain. Ser-16 contacts CTP. Ser-16 lines the UTP pocket. Residues 17 to 22 (SLGKGV) and Asp-74 each bind ATP. Residues Asp-74 and Glu-143 each contribute to the Mg(2+) site. CTP is bound by residues 150–152 (DIE), 190–195 (KTKPTQ), and Lys-226. UTP is bound by residues 190 to 195 (KTKPTQ) and Lys-226. The Glutamine amidotransferase type-1 domain occupies 294 to 546 (IIAMVGKYVS…IQAAIENSNN (253 aa)). Gly-356 is an L-glutamine binding site. The Nucleophile; for glutamine hydrolysis role is filled by Cys-383. Residues 384–387 (LGMQ), Glu-407, and Arg-474 contribute to the L-glutamine site. Active-site residues include His-519 and Glu-521.

The protein belongs to the CTP synthase family. In terms of assembly, homotetramer.

It carries out the reaction UTP + L-glutamine + ATP + H2O = CTP + L-glutamate + ADP + phosphate + 2 H(+). It catalyses the reaction L-glutamine + H2O = L-glutamate + NH4(+). The enzyme catalyses UTP + NH4(+) + ATP = CTP + ADP + phosphate + 2 H(+). It functions in the pathway pyrimidine metabolism; CTP biosynthesis via de novo pathway; CTP from UDP: step 2/2. Its activity is regulated as follows. Allosterically activated by GTP, when glutamine is the substrate; GTP has no effect on the reaction when ammonia is the substrate. The allosteric effector GTP functions by stabilizing the protein conformation that binds the tetrahedral intermediate(s) formed during glutamine hydrolysis. Inhibited by the product CTP, via allosteric rather than competitive inhibition. Catalyzes the ATP-dependent amination of UTP to CTP with either L-glutamine or ammonia as the source of nitrogen. Regulates intracellular CTP levels through interactions with the four ribonucleotide triphosphates. In Francisella tularensis subsp. holarctica (strain FTNF002-00 / FTA), this protein is CTP synthase.